Here is a 243-residue protein sequence, read N- to C-terminus: Pleckstrin homology domain-containing family B member 1 (243 aa).

Residues 21-128 form the PH domain; that stretch reads ALVRGGWLWR…WKTALMEANS (108 aa).

In terms of assembly, binds transducins. Homodimer. Interacts (via PH domain) with MYO1C. Interacts (via PH domain) with MYO7A. Highly expressed in retina and brain. In retina, abundantly expressed in photoreceptors. Isoform 4 is the predominant isoform expressed in mature olfactory receptor neurons and vestibular and cochlear hair cells. Also expressed in cells with possible sensory function, including peripheral retinal ganglion cells, cochlear interdental cells, and neurons of the circumventricular organ (at protein level).

The protein localises to the membrane. The protein resides in the cytoplasm. This chain is Pleckstrin homology domain-containing family B member 1 (Plekhb1), found in Mus musculus (Mouse).